The sequence spans 450 residues: Tol-Pal system protein TolB (450 aa).

The signal sequence occupies residues 1–37 (MIERNGLQRMPFRLNRRHMISGMASAAVLLGSRQALG).

The protein belongs to the TolB family. In terms of assembly, the Tol-Pal system is composed of five core proteins: the inner membrane proteins TolA, TolQ and TolR, the periplasmic protein TolB and the outer membrane protein Pal. They form a network linking the inner and outer membranes and the peptidoglycan layer.

Its subcellular location is the periplasm. Functionally, part of the Tol-Pal system, which plays a role in outer membrane invagination during cell division and is important for maintaining outer membrane integrity. This chain is Tol-Pal system protein TolB, found in Nitrobacter winogradskyi (strain ATCC 25391 / DSM 10237 / CIP 104748 / NCIMB 11846 / Nb-255).